The primary structure comprises 397 residues: Elongation factor Tu (397 aa).

One can recognise a tr-type G domain in the interval K10–E206. A G1 region spans residues G19–T26. A GTP-binding site is contributed by G19–T26. T26 contributes to the Mg(2+) binding site. The segment at G62–S66 is G2. The G3 stretch occupies residues D83–G86. GTP-binding positions include D83–H87 and N138–D141. The tract at residues N138–D141 is G4. Positions S176 to F178 are G5.

The protein belongs to the TRAFAC class translation factor GTPase superfamily. Classic translation factor GTPase family. EF-Tu/EF-1A subfamily. Monomer.

It is found in the cytoplasm. The enzyme catalyses GTP + H2O = GDP + phosphate + H(+). Functionally, GTP hydrolase that promotes the GTP-dependent binding of aminoacyl-tRNA to the A-site of ribosomes during protein biosynthesis. The sequence is that of Elongation factor Tu from Cutibacterium acnes (strain DSM 16379 / KPA171202) (Propionibacterium acnes).